The sequence spans 715 residues: Methionine--tRNA ligase (715 aa).

The 'HIGH' region motif lies at 20–30; the sequence is PYANGKAHIGH. Positions 151, 154, 163, and 167 each coordinate Zn(2+). Positions 334-338 match the 'KMSKS' region motif; sequence KFSKT. Lys337 is an ATP binding site. Residues 559–593 are disordered; that stretch reads ANAKRNGVKGGEKEPSKSEGMGPSEASKASEKTVD. One can recognise a tRNA-binding domain in the interval 613–715; the sequence is DFAKLDIRVG…KEIKSGSRIR (103 aa).

This sequence belongs to the class-I aminoacyl-tRNA synthetase family. MetG type 1 subfamily. As to quaternary structure, homodimer. The cofactor is Zn(2+).

It is found in the cytoplasm. The catalysed reaction is tRNA(Met) + L-methionine + ATP = L-methionyl-tRNA(Met) + AMP + diphosphate. Functionally, is required not only for elongation of protein synthesis but also for the initiation of all mRNA translation through initiator tRNA(fMet) aminoacylation. This chain is Methionine--tRNA ligase, found in Methanosarcina mazei (strain ATCC BAA-159 / DSM 3647 / Goe1 / Go1 / JCM 11833 / OCM 88) (Methanosarcina frisia).